We begin with the raw amino-acid sequence, 218 residues long: Small ribosomal subunit protein mS34 (218 aa).

It belongs to the mitochondrion-specific ribosomal protein mS34 family. Component of the mitochondrial ribosome small subunit (28S) which comprises a 12S rRNA and about 30 distinct proteins. In terms of tissue distribution, widely expressed (at protein liver).

Its subcellular location is the mitochondrion. Functionally, required for mitochondrial translation, plays a role in maintaining the stability of the small ribosomal subunit and the 12S rRNA that are required for mitoribosome formation. This is Small ribosomal subunit protein mS34 (Mrps34) from Mus musculus (Mouse).